The sequence spans 148 residues: Ribonuclease H (148 aa).

An RNase H type-1 domain is found at 3–144; sequence AEETVEIFTD…ADALANRGIE (142 aa). Mg(2+) is bound by residues D12, E50, D72, and D136. The disordered stretch occupies residues 129 to 148; sequence HPENERADALANRGIEELKG.

The protein belongs to the RNase H family. Monomer. Mg(2+) serves as cofactor.

Its subcellular location is the cytoplasm. The enzyme catalyses Endonucleolytic cleavage to 5'-phosphomonoester.. Functionally, endonuclease that specifically degrades the RNA of RNA-DNA hybrids. This chain is Ribonuclease H, found in Dechloromonas aromatica (strain RCB).